The sequence spans 401 residues: Homoserine O-acetyltransferase (401 aa).

The region spanning 37 to 358 (NAVLVCHALT…HGHDAFLVEP (322 aa)) is the AB hydrolase-1 domain. The active-site Nucleophile is the serine 146. A substrate-binding site is contributed by arginine 215. Residues aspartate 318 and histidine 351 contribute to the active site. Aspartate 352 contacts substrate.

The protein belongs to the AB hydrolase superfamily. MetX family. As to quaternary structure, homodimer.

It is found in the cytoplasm. The enzyme catalyses L-homoserine + acetyl-CoA = O-acetyl-L-homoserine + CoA. It participates in amino-acid biosynthesis; L-methionine biosynthesis via de novo pathway; O-acetyl-L-homoserine from L-homoserine: step 1/1. Functionally, transfers an acetyl group from acetyl-CoA to L-homoserine, forming acetyl-L-homoserine. The protein is Homoserine O-acetyltransferase of Natronomonas pharaonis (strain ATCC 35678 / DSM 2160 / CIP 103997 / JCM 8858 / NBRC 14720 / NCIMB 2260 / Gabara) (Halobacterium pharaonis).